The primary structure comprises 303 residues: Glycine--tRNA ligase alpha subunit (303 aa).

The protein belongs to the class-II aminoacyl-tRNA synthetase family. In terms of assembly, tetramer of two alpha and two beta subunits.

The protein localises to the cytoplasm. The enzyme catalyses tRNA(Gly) + glycine + ATP = glycyl-tRNA(Gly) + AMP + diphosphate. This Stenotrophomonas maltophilia (strain R551-3) protein is Glycine--tRNA ligase alpha subunit.